The sequence spans 266 residues: Lectin 7 (266 aa).

Positions 1 to 27 are cleaved as a signal peptide; sequence MAINTSRTQILFITIISFLILAQNVNS. N-linked (GlcNAc...) asparagine glycans are attached at residues N121, N205, and N219.

It belongs to the leguminous lectin family.

Functionally, may be involved in arbuscular mycorrhizal (AM) symbiosis with AM fungi. In Medicago truncatula (Barrel medic), this protein is Lectin 7.